We begin with the raw amino-acid sequence, 355 residues long: UDP-N-acetylglucosamine--N-acetylmuramyl-(pentapeptide) pyrophosphoryl-undecaprenol N-acetylglucosamine transferase (355 aa).

UDP-N-acetyl-alpha-D-glucosamine contacts are provided by residues 15-17 (TGG), Asn127, Arg163, Ser191, Ile244, 263-268 (ALTVSE), and Gln288.

Belongs to the glycosyltransferase 28 family. MurG subfamily.

The protein resides in the cell inner membrane. It carries out the reaction di-trans,octa-cis-undecaprenyl diphospho-N-acetyl-alpha-D-muramoyl-L-alanyl-D-glutamyl-meso-2,6-diaminopimeloyl-D-alanyl-D-alanine + UDP-N-acetyl-alpha-D-glucosamine = di-trans,octa-cis-undecaprenyl diphospho-[N-acetyl-alpha-D-glucosaminyl-(1-&gt;4)]-N-acetyl-alpha-D-muramoyl-L-alanyl-D-glutamyl-meso-2,6-diaminopimeloyl-D-alanyl-D-alanine + UDP + H(+). It functions in the pathway cell wall biogenesis; peptidoglycan biosynthesis. Cell wall formation. Catalyzes the transfer of a GlcNAc subunit on undecaprenyl-pyrophosphoryl-MurNAc-pentapeptide (lipid intermediate I) to form undecaprenyl-pyrophosphoryl-MurNAc-(pentapeptide)GlcNAc (lipid intermediate II). The protein is UDP-N-acetylglucosamine--N-acetylmuramyl-(pentapeptide) pyrophosphoryl-undecaprenol N-acetylglucosamine transferase of Escherichia coli O9:H4 (strain HS).